Here is a 380-residue protein sequence, read N- to C-terminus: MCPMLLKNGYNGNATPVTTTAPWASLGLSAKTCNNVSFEESRIVLVVVYSAVCTLGVPANCLTAWLALLQVLQGNVLAVYLLCLALCELLYTGTLPLWVIYIRNQHRWTLGLLACKVTAYIFFCNIYVSILFLCCISCDRFVAVVYALESRGRRRRRTAILISACIFILVGIVHYPVFQTEDKETCFDMLQMDSRIAGYYYARFTVGFAIPLSIIAFTNHRIFRSIKQSMGLSAAQKAKVKHSAIAVVVIFLVCFAPYHLVLLVKAAAFSYYRGDRNAMCGLEERLYTASVVFLCLSTVNGVADPIIYVLATDHSRQEVSRIHKGWKEWSMKTDVTRLTHSRDTEELQSPVALADHYTFSRPVHPPGSPCPAKRLIEESC.

Residues 1 to 45 lie on the Extracellular side of the membrane; the sequence is MCPMLLKNGYNGNATPVTTTAPWASLGLSAKTCNNVSFEESRIVL. An N-linked (GlcNAc...) asparagine glycan is attached at asparagine 35. Residues 46-68 form a helical membrane-spanning segment; it reads VVVYSAVCTLGVPANCLTAWLAL. Over 69–79 the chain is Cytoplasmic; the sequence is LQVLQGNVLAV. Residues 80–102 form a helical membrane-spanning segment; sequence YLLCLALCELLYTGTLPLWVIYI. Topologically, residues 103–116 are extracellular; sequence RNQHRWTLGLLACK. Cysteine 115 and cysteine 186 are disulfide-bonded. The helical transmembrane segment at 117–138 threads the bilayer; it reads VTAYIFFCNIYVSILFLCCISC. Topologically, residues 139–158 are cytoplasmic; it reads DRFVAVVYALESRGRRRRRT. Residues 159-178 traverse the membrane as a helical segment; that stretch reads AILISACIFILVGIVHYPVF. The Extracellular portion of the chain corresponds to 179–197; it reads QTEDKETCFDMLQMDSRIA. A helical membrane pass occupies residues 198 to 220; that stretch reads GYYYARFTVGFAIPLSIIAFTNH. Residues 221-246 lie on the Cytoplasmic side of the membrane; the sequence is RIFRSIKQSMGLSAAQKAKVKHSAIA. A helical membrane pass occupies residues 247–269; the sequence is VVVIFLVCFAPYHLVLLVKAAAF. At 270–288 the chain is on the extracellular side; sequence SYYRGDRNAMCGLEERLYT. Residues 289 to 311 traverse the membrane as a helical segment; that stretch reads ASVVFLCLSTVNGVADPIIYVLA. Over 312 to 380 the chain is Cytoplasmic; sequence TDHSRQEVSR…PAKRLIEESC (69 aa).

The protein belongs to the G-protein coupled receptor 1 family. In terms of tissue distribution, highly expressed in macrophages and hematopoietic tissues rich in lymphocytes, like spleen and thymus. Weakly expressed in heart and lung. In atherosclerotic plaques, expression is observed around the lipid core and at the shoulder region.

The protein resides in the cell membrane. Functionally, may be a receptor for oxidized free fatty acids derived from linoleic and arachidonic acids such as 9-hydroxyoctadecadienoic acid (9-HODE). Activates a G alpha protein, most likely G alpha(q). May be involved in apoptosis. Functions at the G2/M checkpoint to delay mitosis. May function as a sensor that monitors the oxidative states and mediates appropriate cellular responses such as secretion of paracrine signals and attenuation of proliferation. May mediate ths accumulation of intracellular inositol phosphates at acidic pH through proton-sensing activity. The polypeptide is Probable G-protein coupled receptor 132 (GPR132) (Homo sapiens (Human)).